Here is a 348-residue protein sequence, read N- to C-terminus: Methylthioribose-1-phosphate isomerase (348 aa).

Residues 46-48 (RGA), R88, and Q194 each bind substrate. D235 serves as the catalytic Proton donor. Residue 245 to 246 (NK) participates in substrate binding.

Belongs to the eIF-2B alpha/beta/delta subunits family. MtnA subfamily.

The enzyme catalyses 5-(methylsulfanyl)-alpha-D-ribose 1-phosphate = 5-(methylsulfanyl)-D-ribulose 1-phosphate. It functions in the pathway amino-acid biosynthesis; L-methionine biosynthesis via salvage pathway; L-methionine from S-methyl-5-thio-alpha-D-ribose 1-phosphate: step 1/6. Its function is as follows. Catalyzes the interconversion of methylthioribose-1-phosphate (MTR-1-P) into methylthioribulose-1-phosphate (MTRu-1-P). The protein is Methylthioribose-1-phosphate isomerase of Desulforudis audaxviator (strain MP104C).